Consider the following 31-residue polypeptide: Protamine-1B (31 aa).

A disordered region spans residues M1–R31.

Testis.

It is found in the nucleus. Its subcellular location is the chromosome. In terms of biological role, protamines substitute for histones in the chromatin of sperm during the haploid phase of spermatogenesis. They compact sperm DNA into a highly condensed, stable and inactive complex. This is Protamine-1B from Oncorhynchus mykiss (Rainbow trout).